We begin with the raw amino-acid sequence, 685 residues long: Methionine--tRNA ligase (685 aa).

A 'HIGH' region motif is present at residues 12–22 (PYANGSIHLGH). The Zn(2+) site is built by cysteine 143, cysteine 146, cysteine 156, and cysteine 159. Positions 339 to 343 (KMSKS) match the 'KMSKS' region motif. Lysine 342 contacts ATP. Positions 582–685 (DFMKIDMRVA…TGAQPGDKVG (104 aa)) constitute a tRNA-binding domain.

It belongs to the class-I aminoacyl-tRNA synthetase family. MetG type 1 subfamily. Homodimer. Requires Zn(2+) as cofactor.

Its subcellular location is the cytoplasm. It catalyses the reaction tRNA(Met) + L-methionine + ATP = L-methionyl-tRNA(Met) + AMP + diphosphate. Its function is as follows. Is required not only for elongation of protein synthesis but also for the initiation of all mRNA translation through initiator tRNA(fMet) aminoacylation. This chain is Methionine--tRNA ligase, found in Neisseria meningitidis serogroup B (strain ATCC BAA-335 / MC58).